A 129-amino-acid chain; its full sequence is Large-conductance mechanosensitive channel (129 aa).

The next 2 membrane-spanning stretches (helical) occupy residues 10–30 (FAVK…GAFG) and 76–96 (GAFI…FGMV).

The protein belongs to the MscL family. As to quaternary structure, homopentamer.

Its subcellular location is the cell inner membrane. Functionally, channel that opens in response to stretch forces in the membrane lipid bilayer. May participate in the regulation of osmotic pressure changes within the cell. The protein is Large-conductance mechanosensitive channel of Actinobacillus pleuropneumoniae serotype 5b (strain L20).